The primary structure comprises 412 residues: CCA-adding enzyme (412 aa).

2 residues coordinate ATP: Gly8 and Arg11. CTP-binding residues include Gly8 and Arg11. Residues Asp21 and Asp23 each contribute to the Mg(2+) site. Residues Arg91, Arg137, and Arg140 each coordinate ATP. Residues Arg91, Arg137, and Arg140 each contribute to the CTP site.

It belongs to the tRNA nucleotidyltransferase/poly(A) polymerase family. Bacterial CCA-adding enzyme type 2 subfamily. Mg(2+) is required as a cofactor.

The catalysed reaction is a tRNA precursor + 2 CTP + ATP = a tRNA with a 3' CCA end + 3 diphosphate. It carries out the reaction a tRNA with a 3' CCA end + 2 CTP + ATP = a tRNA with a 3' CCACCA end + 3 diphosphate. In terms of biological role, catalyzes the addition and repair of the essential 3'-terminal CCA sequence in tRNAs without using a nucleic acid template. Adds these three nucleotides in the order of C, C, and A to the tRNA nucleotide-73, using CTP and ATP as substrates and producing inorganic pyrophosphate. tRNA 3'-terminal CCA addition is required both for tRNA processing and repair. Also involved in tRNA surveillance by mediating tandem CCA addition to generate a CCACCA at the 3' terminus of unstable tRNAs. While stable tRNAs receive only 3'-terminal CCA, unstable tRNAs are marked with CCACCA and rapidly degraded. This chain is CCA-adding enzyme, found in Buchnera aphidicola subsp. Schizaphis graminum (strain Sg).